The chain runs to 232 residues: 5'-methylthioadenosine/S-adenosylhomocysteine nucleosidase (232 aa).

E12 acts as the Proton acceptor in catalysis. Substrate is bound by residues G78, I152, and 173-174; that span reads ME. D197 acts as the Proton donor in catalysis.

The protein belongs to the PNP/UDP phosphorylase family. MtnN subfamily. In terms of assembly, homodimer.

It carries out the reaction S-adenosyl-L-homocysteine + H2O = S-(5-deoxy-D-ribos-5-yl)-L-homocysteine + adenine. It catalyses the reaction S-methyl-5'-thioadenosine + H2O = 5-(methylsulfanyl)-D-ribose + adenine. The catalysed reaction is 5'-deoxyadenosine + H2O = 5-deoxy-D-ribose + adenine. It functions in the pathway amino-acid biosynthesis; L-methionine biosynthesis via salvage pathway; S-methyl-5-thio-alpha-D-ribose 1-phosphate from S-methyl-5'-thioadenosine (hydrolase route): step 1/2. Catalyzes the irreversible cleavage of the glycosidic bond in both 5'-methylthioadenosine (MTA) and S-adenosylhomocysteine (SAH/AdoHcy) to adenine and the corresponding thioribose, 5'-methylthioribose and S-ribosylhomocysteine, respectively. Also cleaves 5'-deoxyadenosine, a toxic by-product of radical S-adenosylmethionine (SAM) enzymes, into 5-deoxyribose and adenine. Thus, is required for in vivo function of the radical SAM enzymes biotin synthase and lipoic acid synthase, that are inhibited by 5'-deoxyadenosine accumulation. The polypeptide is 5'-methylthioadenosine/S-adenosylhomocysteine nucleosidase (Shigella boydii serotype 4 (strain Sb227)).